The sequence spans 125 residues: Small ribosomal subunit protein uS12 (125 aa).

The residue at position 89 (Asp89) is a 3-methylthioaspartic acid.

It belongs to the universal ribosomal protein uS12 family. Part of the 30S ribosomal subunit. Contacts proteins S8 and S17. May interact with IF1 in the 30S initiation complex.

Its function is as follows. With S4 and S5 plays an important role in translational accuracy. Interacts with and stabilizes bases of the 16S rRNA that are involved in tRNA selection in the A site and with the mRNA backbone. Located at the interface of the 30S and 50S subunits, it traverses the body of the 30S subunit contacting proteins on the other side and probably holding the rRNA structure together. The combined cluster of proteins S8, S12 and S17 appears to hold together the shoulder and platform of the 30S subunit. The protein is Small ribosomal subunit protein uS12 of Cupriavidus metallidurans (strain ATCC 43123 / DSM 2839 / NBRC 102507 / CH34) (Ralstonia metallidurans).